The chain runs to 248 residues: Orotidine 5'-phosphate decarboxylase (248 aa).

Residues Asp22, Lys44, 71–80 (DLKFHDIPNT), Thr131, Arg192, Gln201, Gly221, and Arg222 each bind substrate. Residue Lys73 is the Proton donor of the active site.

It belongs to the OMP decarboxylase family. Type 1 subfamily. As to quaternary structure, homodimer.

It carries out the reaction orotidine 5'-phosphate + H(+) = UMP + CO2. It functions in the pathway pyrimidine metabolism; UMP biosynthesis via de novo pathway; UMP from orotate: step 2/2. Functionally, catalyzes the decarboxylation of orotidine 5'-monophosphate (OMP) to uridine 5'-monophosphate (UMP). The sequence is that of Orotidine 5'-phosphate decarboxylase from Photorhabdus laumondii subsp. laumondii (strain DSM 15139 / CIP 105565 / TT01) (Photorhabdus luminescens subsp. laumondii).